The following is a 777-amino-acid chain: Semaphorin-4F (777 aa).

Residues 1–40 form the signal peptide; sequence MLARAERPRPGPRPPPVSLFPPPSSLLLLLLAMLSAPVCG. Over 41–667 the chain is Extracellular; the sequence is RVPRSVPRTS…PANRAHTVVG (627 aa). In terms of domain architecture, Sema spans 48–516; it reads RTSLPISEAD…SHTEVTQVNT (469 aa). Asn-70 carries N-linked (GlcNAc...) asparagine glycosylation. A disulfide bridge links Cys-118 with Cys-128. A glycan (N-linked (GlcNAc...) asparagine) is linked at Asn-139. Intrachain disulfides connect Cys-146–Cys-155, Cys-279–Cys-390, and Cys-303–Cys-349. An N-linked (GlcNAc...) asparagine glycan is attached at Asn-515. Positions 518–569 constitute a PSI domain; the sequence is NCGRLQSCSECILAQDPVCAWSFRLDACVAHAGEHRGMVQDIESADVSSLCP. 3 cysteine pairs are disulfide-bonded: Cys-519–Cys-536, Cys-528–Cys-545, and Cys-593–Cys-634. Residues 586–641 enclose the Ig-like C2-type domain; sequence VGHVVLPCSPSSAWASCVWHQPSGVTSLTPRRDGLEVVVTPGAMGAYACECQEGGA. The chain crosses the membrane as a helical span at residues 668–688; it reads AGLVGFFLGVLAASLTLLLIG. Topologically, residues 689–777 are cytoplasmic; it reads RRQQRRRQRE…PLATCDETSI (89 aa). A disordered region spans residues 703–742; it reads DKVGLDLGAPPSGTTSYSQDPPSPSPEDERLPLALGKRGS. Phosphoserine occurs at positions 725 and 727. The PDZ-binding motif lies at 775 to 777; sequence TSI.

The protein belongs to the semaphorin family. In terms of assembly, interacts (via PDZ-binding motif) with DLG4/SAP90 (via PDZ domain 2); this interaction may promote translocation of DLG4/SAP90 to the membrane. As to expression, expressed throughout the adult brain, where it shows particularly strong expression in the hippocampus, corpus callosum, granular layer and deep nuclei of the cerebellum, and the mitral layer of the olfactory bulb (at protein level). At the cellular level, detected in neuronal precursors, postmitotic neurons, pyramidal neurons, and glial cells including mature oligodendocytes and oligodendroglial precursor cells (at protein level).

The protein localises to the cell membrane. It localises to the postsynaptic density. Its subcellular location is the perikaryon. It is found in the cell projection. The protein resides in the dendrite. In terms of biological role, probable cell surface receptor that regulates oligodendroglial precursor cell migration. Might also regulate differentiation of oligodendroglial precursor cells. Has growth cone collapse activity against retinal ganglion-cell axons. This chain is Semaphorin-4F (Sema4f), found in Mus musculus (Mouse).